The following is a 169-amino-acid chain: Peptide methionine sulfoxide reductase MsrA (169 aa).

Cys-10 is a catalytic residue.

The protein belongs to the MsrA Met sulfoxide reductase family.

It carries out the reaction L-methionyl-[protein] + [thioredoxin]-disulfide + H2O = L-methionyl-(S)-S-oxide-[protein] + [thioredoxin]-dithiol. It catalyses the reaction [thioredoxin]-disulfide + L-methionine + H2O = L-methionine (S)-S-oxide + [thioredoxin]-dithiol. Its function is as follows. Has an important function as a repair enzyme for proteins that have been inactivated by oxidation. Catalyzes the reversible oxidation-reduction of methionine sulfoxide in proteins to methionine. This chain is Peptide methionine sulfoxide reductase MsrA, found in Streptococcus pyogenes serotype M2 (strain MGAS10270).